The primary structure comprises 255 residues: Triosephosphate isomerase (255 aa).

9–11 (NWK) provides a ligand contact to substrate. Catalysis depends on His-95, which acts as the Electrophile. Catalysis depends on Glu-167, which acts as the Proton acceptor. Substrate contacts are provided by residues Gly-173, Ser-212, and 233–234 (GG).

This sequence belongs to the triosephosphate isomerase family. In terms of assembly, homodimer.

The protein resides in the cytoplasm. It carries out the reaction D-glyceraldehyde 3-phosphate = dihydroxyacetone phosphate. Its pathway is carbohydrate biosynthesis; gluconeogenesis. It participates in carbohydrate degradation; glycolysis; D-glyceraldehyde 3-phosphate from glycerone phosphate: step 1/1. In terms of biological role, involved in the gluconeogenesis. Catalyzes stereospecifically the conversion of dihydroxyacetone phosphate (DHAP) to D-glyceraldehyde-3-phosphate (G3P). The chain is Triosephosphate isomerase from Klebsiella pneumoniae.